The sequence spans 481 residues: 5-hydroxytryptamine receptor 2B (481 aa).

Topologically, residues 1-56 (MALSYRVSELQSTIPEHILQSTFVHVISSNWSGLQTESIPEEMKQIVEEQGNKLHW) are extracellular. A glycan (N-linked (GlcNAc...) asparagine) is linked at N30. The helical transmembrane segment at 57 to 79 (AALLILMVIIPTIGGNTLVILAV) threads the bilayer. Residues 80 to 90 (SLEKKLQYATN) are Cytoplasmic-facing. A helical transmembrane segment spans residues 91–113 (YFLMSLAVADLLVGLFVMPIALL). The Extracellular segment spans residues 114–129 (TIMFEAMWPLPLVLCP). C128 and C207 are oxidised to a cystine. The chain crosses the membrane as a helical span at residues 130–151 (AWLFLDVLFSTASIMHLCAISV). Positions 135 and 140 each coordinate ergotamine. Residues 152 to 154 (DRY) carry the DRY motif; important for ligand-induced conformation changes motif. Residues 152–171 (DRYIAIKKPIQANQYNSRAT) are Cytoplasmic-facing. The helical transmembrane segment at 172 to 192 (AFIKITVVWLISIGIAIPVPI) threads the bilayer. Over 193-216 (KGIETDVDNPNNITCVLTKERFGD) the chain is Extracellular. L209 serves as a coordination point for ergotamine. The short motif at 212–215 (ERFG) is the [DE]RFG motif; may stabilize a conformation that preferentially activates signaling via beta-arrestin family members element. Residues 217 to 239 (FMLFGSLAAFFTPLAIMIVTYFL) traverse the membrane as a helical segment. Residues 240 to 324 (TIHALQKKAY…TISNEQRASK (85 aa)) are Cytoplasmic-facing. Residues 325–345 (VLGIVFFLFLLMWCPFFITNI) traverse the membrane as a helical segment. The Extracellular segment spans residues 346–360 (TLVLCDSCNQTTLQM). A disulfide bond links C350 and C353. Residues 361-382 (LLEIFVWIGYVSSGVNPLVYTL) form a helical membrane-spanning segment. Residues 376 to 380 (NPLVY) carry the NPxxY motif; important for ligand-induced conformation changes and signaling motif. Residues 383-481 (FNKTFRDAFG…DKTEEQVSYV (99 aa)) lie on the Cytoplasmic side of the membrane. C397 carries the S-palmitoyl cysteine lipid modification. Positions 479–481 (SYV) match the PDZ-binding motif.

It belongs to the G-protein coupled receptor 1 family. As to quaternary structure, interacts (via C-terminus) with MPDZ. As to expression, ubiquitous. Detected in liver, kidney, heart, pulmonary artery, and intestine. Detected at lower levels in blood, placenta and brain, especially in cerebellum, occipital cortex and frontal cortex.

The protein resides in the cell membrane. The protein localises to the synapse. It localises to the synaptosome. Its function is as follows. G-protein coupled receptor for 5-hydroxytryptamine (serotonin). Also functions as a receptor for various ergot alkaloid derivatives and psychoactive substances. Ligand binding causes a conformation change that triggers signaling via guanine nucleotide-binding proteins (G proteins) and modulates the activity of downstream effectors. HTR2B is coupled to G(q)/G(11) G alpha proteins and activates phospholipase C-beta, releasing diacylglycerol (DAG) and inositol 1,4,5-trisphosphate (IP3) second messengers that modulate the activity of phosphatidylinositol 3-kinase and promote the release of Ca(2+) ions from intracellular stores, respectively. Beta-arrestin family members inhibit signaling via G proteins and mediate activation of alternative signaling pathways. Plays a role in the regulation of dopamine and 5-hydroxytryptamine release, 5-hydroxytryptamine uptake and in the regulation of extracellular dopamine and 5-hydroxytryptamine levels, and thereby affects neural activity. May play a role in the perception of pain. Plays a role in the regulation of behavior, including impulsive behavior. Required for normal proliferation of embryonic cardiac myocytes and normal heart development. Protects cardiomyocytes against apoptosis. Plays a role in the adaptation of pulmonary arteries to chronic hypoxia. Plays a role in vasoconstriction. Required for normal osteoblast function and proliferation, and for maintaining normal bone density. Required for normal proliferation of the interstitial cells of Cajal in the intestine. This Homo sapiens (Human) protein is 5-hydroxytryptamine receptor 2B.